Consider the following 60-residue polypeptide: Large ribosomal subunit protein uL30 (60 aa).

This sequence belongs to the universal ribosomal protein uL30 family. Part of the 50S ribosomal subunit.

The sequence is that of Large ribosomal subunit protein uL30 from Streptomyces griseus subsp. griseus (strain JCM 4626 / CBS 651.72 / NBRC 13350 / KCC S-0626 / ISP 5235).